The sequence spans 205 residues: Heme-binding protein 2 (205 aa).

Residues 1–37 form a disordered region; that stretch reads MAEEPEPDLGVAEGSEDQALEMPSWKAPEDIDPQPGS. Residue alanine 2 is modified to N-acetylalanine. The residue at position 181 (serine 181) is a Phosphoserine.

The protein belongs to the HEBP family. As to quaternary structure, monomer. Interacts with LRPPRC. May interact with BCL2L1; an interaction with BCL2L1 was observed using a peptide, but not with the full-length protein. The full-length protein would have to undergo a major conformation change for the interaction to occur. Interacts with PDCD6.

It is found in the cytoplasm. It localises to the mitochondrion. In terms of biological role, can promote mitochondrial permeability transition and facilitate necrotic cell death under different types of stress conditions. May have low affinity for heme. In Mus musculus (Mouse), this protein is Heme-binding protein 2 (Hebp2).